Consider the following 160-residue polypeptide: Outer membrane protein MT2024.1 (160 aa).

Positions 1-22 are cleaved as a signal peptide; sequence MSWSRVIAYGLLPGLALALTCG.

It localises to the cell outer membrane. In Mycobacterium tuberculosis (strain CDC 1551 / Oshkosh), this protein is Outer membrane protein MT2024.1.